Here is a 626-residue protein sequence, read N- to C-terminus: DNA mismatch repair protein MutL (626 aa).

The segment at 352-399 (QPPSPSFTSRPSSAGYASGSWHPAVSSPRTEWSPQTAHPAHRPLDLGA) is disordered. Residues 378 to 387 (SPRTEWSPQT) are compositionally biased toward polar residues.

It belongs to the DNA mismatch repair MutL/HexB family.

Functionally, this protein is involved in the repair of mismatches in DNA. It is required for dam-dependent methyl-directed DNA mismatch repair. May act as a 'molecular matchmaker', a protein that promotes the formation of a stable complex between two or more DNA-binding proteins in an ATP-dependent manner without itself being part of a final effector complex. This is DNA mismatch repair protein MutL from Brucella anthropi (strain ATCC 49188 / DSM 6882 / CCUG 24695 / JCM 21032 / LMG 3331 / NBRC 15819 / NCTC 12168 / Alc 37) (Ochrobactrum anthropi).